The following is a 323-amino-acid chain: NADH-ubiquinone oxidoreductase chain 1 (323 aa).

8 helical membrane-spanning segments follow: residues 9–29 (ILNP…LTLI), 76–96 (LFVL…PMPM), 107–127 (ILFV…SGWA), 145–165 (ISYE…SGGF), 175–195 (EATW…ISTL), 227–247 (LFFL…AVLF), 258–278 (EFTS…FLWV), and 298–318 (FLPL…ACAG).

Belongs to the complex I subunit 1 family.

It is found in the mitochondrion inner membrane. The catalysed reaction is a ubiquinone + NADH + 5 H(+)(in) = a ubiquinol + NAD(+) + 4 H(+)(out). Its function is as follows. Core subunit of the mitochondrial membrane respiratory chain NADH dehydrogenase (Complex I) that is believed to belong to the minimal assembly required for catalysis. Complex I functions in the transfer of electrons from NADH to the respiratory chain. The immediate electron acceptor for the enzyme is believed to be ubiquinone. The sequence is that of NADH-ubiquinone oxidoreductase chain 1 (MT-ND1) from Gadus morhua (Atlantic cod).